Here is a 349-residue protein sequence, read N- to C-terminus: UDP-3-O-acylglucosamine N-acyltransferase (349 aa).

The Proton acceptor role is filled by His240.

This sequence belongs to the transferase hexapeptide repeat family. LpxD subfamily. Homotrimer.

The catalysed reaction is a UDP-3-O-[(3R)-3-hydroxyacyl]-alpha-D-glucosamine + a (3R)-hydroxyacyl-[ACP] = a UDP-2-N,3-O-bis[(3R)-3-hydroxyacyl]-alpha-D-glucosamine + holo-[ACP] + H(+). The protein operates within bacterial outer membrane biogenesis; LPS lipid A biosynthesis. In terms of biological role, catalyzes the N-acylation of UDP-3-O-acylglucosamine using 3-hydroxyacyl-ACP as the acyl donor. Is involved in the biosynthesis of lipid A, a phosphorylated glycolipid that anchors the lipopolysaccharide to the outer membrane of the cell. This is UDP-3-O-acylglucosamine N-acyltransferase from Porphyromonas gingivalis (strain ATCC BAA-308 / W83).